The primary structure comprises 333 residues: Trimethylamine N-oxide-binding protein (333 aa).

The first 42 residues, 1–42, serve as a signal peptide directing secretion; that stretch reads MRLFREIAANDPGPTGRMKNMKTFTTALATGVLALCPLAALA. Trp55, Trp102, Glu131, Trp177, and Trp222 together coordinate trimethylamine N-oxide. Pro249, Val251, Asn254, Ala257, and Asp260 together coordinate Ca(2+).

The complex is probably composed of two ATP-binding proteins (TmoW), two transmembrane proteins (TmoV) and a solute-binding protein (TmoX). Monomer in solution, but forms homodimers in crystals.

Its subcellular location is the periplasm. Binds a Ca(2+) ion, which has little effect on either the binding affinity or the secondary structure, but plays an important role in maintaining the stability of TmoX. It may modulate the protein stability in response to biological needs and environmental changes. Thermostability is dramatically decreased when Ca(2+) is removed by EDTA. Part of the ABC transporter complex TmoXWV involved in trimethylamine N-oxide (TMAO) import. Is specific for TMAO and essential for TMAO metabolism. Binds TMAO with high affinity. In vitro, also presents a high binding affinity for choline, however this transporter seems specific for TMAO and the choline-binding affinity presented by recombinant TmoX may not make physiological sense. This is Trimethylamine N-oxide-binding protein from Ruegeria pomeroyi (strain ATCC 700808 / DSM 15171 / DSS-3) (Silicibacter pomeroyi).